The following is a 474-amino-acid chain: PRAME family member 7 (474 aa).

The LRR 1; degenerate repeat unit spans residues 97–122; it reads QSKLQVLDLRNVDENFCDIFSGATAS. The LRR 2; degenerate repeat unit spans residues 177-201; it reads HVCCKELQVFGMPIHSIIEVLNMVE. An LRR 3; degenerate repeat occupies 202 to 228; the sequence is LDCIQEVEVCCPWELSTLVKFAPYLGQ. The LRR 4; degenerate repeat unit spans residues 229–264; that stretch reads MRNLRKLVLFNIRASACIPPDNKGQFIARFTSQFLK. 5 LRR repeats span residues 265-290, 291-322, 323-341, 347-374, and 375-399; these read LDYF…LRCL, QASL…RQLK, ELDL…PLTG, VATL…VLSR, and CSQL…LLRH.

The protein belongs to the PRAME family.

The protein is PRAME family member 7 of Homo sapiens (Human).